A 283-amino-acid polypeptide reads, in one-letter code: Bifunctional protein FolD (283 aa).

166 to 168 (GAS) provides a ligand contact to NADP(+).

It belongs to the tetrahydrofolate dehydrogenase/cyclohydrolase family. As to quaternary structure, homodimer.

The catalysed reaction is (6R)-5,10-methylene-5,6,7,8-tetrahydrofolate + NADP(+) = (6R)-5,10-methenyltetrahydrofolate + NADPH. It carries out the reaction (6R)-5,10-methenyltetrahydrofolate + H2O = (6R)-10-formyltetrahydrofolate + H(+). It functions in the pathway one-carbon metabolism; tetrahydrofolate interconversion. Catalyzes the oxidation of 5,10-methylenetetrahydrofolate to 5,10-methenyltetrahydrofolate and then the hydrolysis of 5,10-methenyltetrahydrofolate to 10-formyltetrahydrofolate. In Coxiella burnetii (strain CbuK_Q154) (Coxiella burnetii (strain Q154)), this protein is Bifunctional protein FolD.